The following is an 832-amino-acid chain: Cation/H(+) antiporter 21 (832 aa).

Transmembrane regions (helical) follow at residues isoleucine 33–tyrosine 55, leucine 61–leucine 81, leucine 99–leucine 119, valine 132–leucine 152, isoleucine 161–alanine 181, cysteine 200–phenylalanine 220, serine 236–phenylalanine 256, isoleucine 278–phenylalanine 298, phenylalanine 319–glycine 339, valine 352–leucine 372, glycine 379–alanine 399, and histidine 413–tyrosine 433. Polar residues predominate over residues arginine 792 to proline 802. The tract at residues arginine 792 to arginine 832 is disordered.

It belongs to the monovalent cation:proton antiporter 2 (CPA2) transporter (TC 2.A.37) family. CHX (TC 2.A.37.4) subfamily. As to expression, specifically expressed in root endodermal cells. Expressed in seedlings, roots, leaves, flowers, flower buds and pollen.

The protein localises to the cell membrane. Functionally, operates as a Na(+)/H(+) antiporter that plays a role in regulation of xylem Na(+) concentration and, consequently, Na(+) accumulation in the leaf. Required for pollen tube guidance, but not for normal pollen development. May also be involved in the development or function of the female gametophyte. This Arabidopsis thaliana (Mouse-ear cress) protein is Cation/H(+) antiporter 21 (CHX21).